The sequence spans 662 residues: LIM domain kinase 1 (662 aa).

2 consecutive LIM zinc-binding domains span residues P24–E83 and L84–T145. The 94-residue stretch at L166 to P259 folds into the PDZ domain. The segment at P262–S328 is disordered. Positions S272–A287 are enriched in pro residues. Low complexity predominate over residues S309–S320. In terms of domain architecture, Protein kinase spans L346–L611. ATP contacts are provided by residues L352–A360 and K375. Residue D467 is part of the active site.

The protein belongs to the protein kinase superfamily. TKL Ser/Thr protein kinase family. Expressed predominantly in the brain.

The protein resides in the cytoplasm. The protein localises to the nucleus. It localises to the cytoskeleton. Its subcellular location is the cell projection. It is found in the growth cone. The catalysed reaction is L-seryl-[protein] + ATP = O-phospho-L-seryl-[protein] + ADP + H(+). The enzyme catalyses L-threonyl-[protein] + ATP = O-phospho-L-threonyl-[protein] + ADP + H(+). Functionally, protein kinase which regulates actin filament dynamics. Phosphorylates and inactivates the actin binding/depolymerizing factor cofilin, thereby stabilizing the actin cytoskeleton. Required for motility of the axon growth cone. In Gallus gallus (Chicken), this protein is LIM domain kinase 1 (LIMK1).